The primary structure comprises 354 residues: Protein-glutamate methylesterase/protein-glutamine glutaminase (354 aa).

Residues 6 to 123 enclose the Response regulatory domain; that stretch reads RVLIVDDSAV…SQSLETLSAA (118 aa). Position 57 is a 4-aspartylphosphate (D57). In terms of domain architecture, CheB-type methylesterase spans 159–351; that stretch reads ARTTHQLLAV…GDLLKQLQTR (193 aa). Active-site residues include S171, H197, and D293.

This sequence belongs to the CheB family. Phosphorylated by CheA. Phosphorylation of the N-terminal regulatory domain activates the methylesterase activity.

The protein resides in the cytoplasm. The enzyme catalyses [protein]-L-glutamate 5-O-methyl ester + H2O = L-glutamyl-[protein] + methanol + H(+). It carries out the reaction L-glutaminyl-[protein] + H2O = L-glutamyl-[protein] + NH4(+). Involved in chemotaxis. Part of a chemotaxis signal transduction system that modulates chemotaxis in response to various stimuli. Catalyzes the demethylation of specific methylglutamate residues introduced into the chemoreceptors (methyl-accepting chemotaxis proteins or MCP) by CheR. Also mediates the irreversible deamidation of specific glutamine residues to glutamic acid. This is Protein-glutamate methylesterase/protein-glutamine glutaminase from Bdellovibrio bacteriovorus (strain ATCC 15356 / DSM 50701 / NCIMB 9529 / HD100).